The primary structure comprises 496 residues: Glutamyl-tRNA(Gln) amidotransferase subunit A, mitochondrial (496 aa).

Active-site charge relay system residues include K80 and S161. The active-site Acyl-ester intermediate is the S185.

Belongs to the amidase family. GatA subfamily. As to quaternary structure, subunit of the heterotrimeric GatCAB amidotransferase (AdT) complex, composed of A, B and C subunits.

The protein resides in the mitochondrion. It carries out the reaction L-glutamyl-tRNA(Gln) + L-glutamine + ATP + H2O = L-glutaminyl-tRNA(Gln) + L-glutamate + ADP + phosphate + H(+). Allows the formation of correctly charged Gln-tRNA(Gln) through the transamidation of misacylated Glu-tRNA(Gln) in the mitochondria. The reaction takes place in the presence of glutamine and ATP through an activated gamma-phospho-Glu-tRNA(Gln). This Culex quinquefasciatus (Southern house mosquito) protein is Glutamyl-tRNA(Gln) amidotransferase subunit A, mitochondrial.